Consider the following 554-residue polypeptide: Intraflagellar transport protein 56 (554 aa).

The segment at 1–23 (MMLSRAKPAVGNEVQQIDKKKKK) is disordered. TPR repeat units lie at residues 57–90 (EDTE…EGCN), 92–125 (DVWV…LQNR), 151–184 (IEDQ…NRDF), and 468–501 (ANDC…EGKR).

The protein belongs to the IFT56 family. Component of the IFT complex B.

It localises to the cell projection. The protein localises to the cilium. Functionally, component of the intraflagellar transport (IFT) complex B required for transport of proteins in the motile cilium. Required for transport of specific ciliary cargo proteins related to motility, while it is neither required for IFT complex B assembly or motion nor for cilium assembly. Plays a key role in maintaining the integrity of the IFT complex B and the proper ciliary localization of the IFT complex B components. Essential for maintaining proper microtubule organization within the ciliary axoneme. This is Intraflagellar transport protein 56 from Xenopus tropicalis (Western clawed frog).